The primary structure comprises 408 residues: tRNA pseudouridine synthase D (408 aa).

The active-site Nucleophile is Asp82. The TRUD domain maps to 157 to 367; it reads GVPNRFGEQR…MEGERRPLRV (211 aa).

Belongs to the pseudouridine synthase TruD family.

The catalysed reaction is uridine(13) in tRNA = pseudouridine(13) in tRNA. Its function is as follows. Responsible for synthesis of pseudouridine from uracil-13 in transfer RNAs. The polypeptide is tRNA pseudouridine synthase D (Geobacter sulfurreducens (strain ATCC 51573 / DSM 12127 / PCA)).